Here is a 421-residue protein sequence, read N- to C-terminus: UDP-N-acetylglucosamine 1-carboxyvinyltransferase (421 aa).

Residue 22–23 (KN) coordinates phosphoenolpyruvate. R93 provides a ligand contact to UDP-N-acetyl-alpha-D-glucosamine. The active-site Proton donor is C117. C117 carries the post-translational modification 2-(S-cysteinyl)pyruvic acid O-phosphothioketal. UDP-N-acetyl-alpha-D-glucosamine-binding positions include 122 to 126 (RPVDL), D308, and I330.

This sequence belongs to the EPSP synthase family. MurA subfamily.

The protein resides in the cytoplasm. It catalyses the reaction phosphoenolpyruvate + UDP-N-acetyl-alpha-D-glucosamine = UDP-N-acetyl-3-O-(1-carboxyvinyl)-alpha-D-glucosamine + phosphate. The protein operates within cell wall biogenesis; peptidoglycan biosynthesis. Functionally, cell wall formation. Adds enolpyruvyl to UDP-N-acetylglucosamine. The sequence is that of UDP-N-acetylglucosamine 1-carboxyvinyltransferase from Pseudomonas fluorescens (strain Pf0-1).